The chain runs to 358 residues: DnaJ homolog subfamily B member 11 (358 aa).

Positions methionine 1 to alanine 22 are cleaved as a signal peptide. The region spanning aspartate 25 to glycine 90 is the J domain. Threonine 188 is modified (phosphothreonine). A glycan (N-linked (GlcNAc...) asparagine) is linked at asparagine 261.

In terms of assembly, part of a large chaperone multiprotein complex comprising DNAJB11, HSP90B1, HSPA5, HYOU, PDIA2, PDIA4, PDIA6, PPIB, SDF2L1, UGGT1 and very small amounts of ERP29, but not, or at very low levels, CALR nor CANX. Binds to denatured substrates in an ATP-independent manner. Interacts via the J domain with HSPA5 in an ATP-dependent manner. Post-translationally, contains high-mannose Endo H-sensitive carbohydrates. In terms of processing, cys-169, Cys-171, Cys-193 and Cys-196 form intramolecular disulfide bonds. The preferential partner for each Cys is not known.

The protein resides in the endoplasmic reticulum lumen. Its function is as follows. As a co-chaperone for HSPA5 it is required for proper folding, trafficking or degradation of proteins. Binds directly to both unfolded proteins that are substrates for ERAD and nascent unfolded peptide chains, but dissociates from the HSPA5-unfolded protein complex before folding is completed. May help recruiting HSPA5 and other chaperones to the substrate. Stimulates HSPA5 ATPase activity. It is necessary for maturation and correct trafficking of PKD1. This is DnaJ homolog subfamily B member 11 (Dnajb11) from Mus musculus (Mouse).